We begin with the raw amino-acid sequence, 96 residues long: Large ribosomal subunit protein bL27 (96 aa).

A propeptide spanning residues M1–F9 is cleaved from the precursor.

The protein belongs to the bacterial ribosomal protein bL27 family. In terms of processing, the N-terminus is cleaved by ribosomal processing cysteine protease Prp.

This Geobacillus kaustophilus (strain HTA426) protein is Large ribosomal subunit protein bL27.